A 348-amino-acid chain; its full sequence is MWNKWAEVSRMNLKNNVELIRQKLPDLEPIAVVKDDAYGHDAAVVVPELLKNGITKFAVVYAKDALMLSEFGAEWILVLDDPPLSNMCSEYEKRGIRFCITDSKWLSDGLLELPIKFHLFVDVGMHREGVPWYETNTIREICKVVGNRLEGICSHLSNGLSDSQALATEEERFREVLSIAPEGLMVHLSNSASLYNAKFPYATHFRPGISLYGYGYPGLKPVLSLKARVIHEHILEPGEGLSYGWTWRATEPTHVVTVPVGYGDGYNRKLSNKAIAGSKAGNLQQIGTVTMDFTMFEAPKNVTVGDEIVLMGEWEGGHFWADEMAQLVGTIPYEVLTSINPRVPRVLV.

The Proton acceptor; specific for D-alanine role is filled by Lys-34. Lys-34 carries the N6-(pyridoxal phosphate)lysine modification. Substrate is bound at residue Arg-127. Tyr-243 functions as the Proton acceptor; specific for L-alanine in the catalytic mechanism. Residue Met-291 coordinates substrate.

It belongs to the alanine racemase family. It depends on pyridoxal 5'-phosphate as a cofactor.

It carries out the reaction L-alanine = D-alanine. It functions in the pathway amino-acid biosynthesis; D-alanine biosynthesis; D-alanine from L-alanine: step 1/1. Catalyzes the interconversion of L-alanine and D-alanine. May also act on other amino acids. The sequence is that of Alanine racemase (alr) from Coprothermobacter proteolyticus (strain ATCC 35245 / DSM 5265 / OCM 4 / BT).